The following is a 415-amino-acid chain: Mitochondrial distribution and morphology protein 12 (415 aa).

The SMP-LTD domain maps to 1-402 (MSFDINWSEL…WPSWVCFDLN (402 aa)). The disordered stretch occupies residues 53 to 146 (EITIRHIGDP…PPLTDLRRSR (94 aa)). 2 stretches are compositionally biased toward acidic residues: residues 62-75 (PFDD…DDDE) and 92-103 (NSSDDDEDDEYD).

The protein belongs to the MDM12 family. As to quaternary structure, component of the ER-mitochondria encounter structure (ERMES) or MDM complex, composed of MMM1, MDM10, MDM12 and MDM34. An MMM1 homodimer associates with one molecule of MDM12 on each side in a pairwise head-to-tail manner, and the SMP-LTD domains of MMM1 and MDM12 generate a continuous hydrophobic tunnel for phospholipid trafficking.

Its subcellular location is the mitochondrion outer membrane. It localises to the endoplasmic reticulum membrane. In terms of biological role, component of the ERMES/MDM complex, which serves as a molecular tether to connect the endoplasmic reticulum (ER) and mitochondria. Components of this complex are involved in the control of mitochondrial shape and protein biogenesis, and function in nonvesicular lipid trafficking between the ER and mitochondria. MDM12 is required for the interaction of the ER-resident membrane protein MMM1 and the outer mitochondrial membrane-resident beta-barrel protein MDM10. The MDM12-MMM1 subcomplex functions in the major beta-barrel assembly pathway that is responsible for biogenesis of all mitochondrial outer membrane beta-barrel proteins, and acts in a late step after the SAM complex. The MDM10-MDM12-MMM1 subcomplex further acts in the TOM40-specific pathway after the action of the MDM12-MMM1 complex. Essential for establishing and maintaining the structure of mitochondria and maintenance of mtDNA nucleoids. This chain is Mitochondrial distribution and morphology protein 12, found in Debaryomyces hansenii (strain ATCC 36239 / CBS 767 / BCRC 21394 / JCM 1990 / NBRC 0083 / IGC 2968) (Yeast).